A 301-amino-acid polypeptide reads, in one-letter code: Ribonuclease Z (301 aa).

Zn(2+) contacts are provided by H61, H63, D65, H66, H140, D211, and H269. D65 functions as the Proton acceptor in the catalytic mechanism.

This sequence belongs to the RNase Z family. As to quaternary structure, homodimer. The cofactor is Zn(2+).

It catalyses the reaction Endonucleolytic cleavage of RNA, removing extra 3' nucleotides from tRNA precursor, generating 3' termini of tRNAs. A 3'-hydroxy group is left at the tRNA terminus and a 5'-phosphoryl group is left at the trailer molecule.. Its function is as follows. Zinc phosphodiesterase, which displays some tRNA 3'-processing endonuclease activity. Probably involved in tRNA maturation, by removing a 3'-trailer from precursor tRNA. The polypeptide is Ribonuclease Z (Bradyrhizobium diazoefficiens (strain JCM 10833 / BCRC 13528 / IAM 13628 / NBRC 14792 / USDA 110)).